The primary structure comprises 96 residues: UPF0235 protein CKO_04329 (96 aa).

This sequence belongs to the UPF0235 family.

In Citrobacter koseri (strain ATCC BAA-895 / CDC 4225-83 / SGSC4696), this protein is UPF0235 protein CKO_04329.